A 132-amino-acid polypeptide reads, in one-letter code: Large ribosomal subunit protein bL12 (132 aa).

Belongs to the bacterial ribosomal protein bL12 family. Homodimer. Part of the ribosomal stalk of the 50S ribosomal subunit. Forms a multimeric L10(L12)X complex, where L10 forms an elongated spine to which 2 to 4 L12 dimers bind in a sequential fashion. Binds GTP-bound translation factors.

Its function is as follows. Forms part of the ribosomal stalk which helps the ribosome interact with GTP-bound translation factors. Is thus essential for accurate translation. The protein is Large ribosomal subunit protein bL12 of Prochlorococcus marinus (strain MIT 9211).